Reading from the N-terminus, the 331-residue chain is Cathepsin 7 (331 aa).

An N-terminal signal peptide occupies residues 1 to 17 (MTPTVFLSILCLGVALA). Positions 18–111 (APAPDYNLDA…GKHIQKRNPK (94 aa)) are cleaved as a propeptide — activation peptide. A Nuclear localization signal motif is present at residues 33–50 (KRSNDRTYSPEEEKQRRA). An N-linked (GlcNAc...) asparagine glycan is attached at Asn72. 3 disulfide bridges follow: Cys133–Cys176, Cys167–Cys209, and Cys267–Cys320. Cys136 is a catalytic residue. Residues His274 and Asn298 contribute to the active site.

This sequence belongs to the peptidase C1 family. As to expression, expressed in placenta. Expressed in parietal and spiral artery-associated trophoblast giant cells, most abundantly during the phase of trophoblast invasion. From 14.5 dpc onwards, expressed at lower levels in labyrinth trophoblast cells. Expressed in trophoblast stem cells. Expressed in heart, liver and testis.

The protein localises to the endosome. Its subcellular location is the lysosome. The protein resides in the cytoplasm. It is found in the perinuclear region. It localises to the golgi apparatus. The protein localises to the nucleus. Its subcellular location is the secreted. The protein resides in the extracellular space. Involved in trophoblast cell proliferation and differentiation probably by affecting mitotic cell cycle progression. Proteolytic activity and nuclear localization are essential for its role in cell cycle progression. The sequence is that of Cathepsin 7 from Mus musculus (Mouse).